The following is a 500-amino-acid chain: Cytochrome P450 11B2, mitochondrial (500 aa).

The N-terminal 24 residues, 1–24, are a transit peptide targeting the mitochondrion; it reads MALRAKADVWLARPWQCLPRTRAL. Position 381 (phenylalanine 381) interacts with 21-hydroxyprogesterone. Cysteine 447 contributes to the heme binding site.

It belongs to the cytochrome P450 family. Heme is required as a cofactor. As to expression, adrenal gland.

Its subcellular location is the mitochondrion inner membrane. The catalysed reaction is a steroid + 2 reduced [adrenodoxin] + O2 + 2 H(+) = an 11beta-hydroxysteroid + 2 oxidized [adrenodoxin] + H2O. The enzyme catalyses 21-hydroxyprogesterone + 2 reduced [adrenodoxin] + O2 + 2 H(+) = corticosterone + 2 oxidized [adrenodoxin] + H2O. It catalyses the reaction corticosterone + 2 reduced [adrenodoxin] + O2 + 2 H(+) = 18-hydroxycorticosterone + 2 oxidized [adrenodoxin] + H2O. It carries out the reaction 18-hydroxycorticosterone + 2 reduced [adrenodoxin] + O2 + 2 H(+) = aldosterone + 2 oxidized [adrenodoxin] + 2 H2O. The catalysed reaction is 11-deoxycortisol + 2 reduced [adrenodoxin] + O2 + 2 H(+) = cortisol + 2 oxidized [adrenodoxin] + H2O. The enzyme catalyses 21-hydroxyprogesterone + 2 reduced [adrenodoxin] + O2 + 2 H(+) = 18-hydroxy-11-deoxycorticosterone + 2 oxidized [adrenodoxin] + H2O. It catalyses the reaction cortisol + 2 reduced [adrenodoxin] + O2 + 2 H(+) = 18-hydroxycortisol + 2 oxidized [adrenodoxin] + H2O. It carries out the reaction 18-hydroxycortisol + 2 reduced [adrenodoxin] + O2 + 2 H(+) = 18-oxocortisol + 2 oxidized [adrenodoxin] + 2 H2O. The protein operates within steroid biosynthesis. In terms of biological role, a cytochrome P450 monooxygenase that catalyzes the biosynthesis of aldosterone, the main mineralocorticoid in the human body responsible for salt and water homeostasis, thus involved in blood pressure regulation, arterial hypertension, and the development of heart failure. Catalyzes three sequential oxidative reactions of 11-deoxycorticosterone (21-hydroxyprogesterone), namely 11-beta hydroxylation, followed by two successive oxidations at C18 yielding 18-hydroxy and then 18-oxo intermediates (that would not leave the enzyme active site during the consecutive hydroxylation reactions), ending with the formation of aldosterone. Can also produce 18-hydroxycortisol and 18-oxocortisol, derived from successive oxidations of cortisol at C18, normally found at very low levels, but significantly increased in primary aldosteronism, the most common form of secondary hypertension. Mechanistically, uses molecular oxygen inserting one oxygen atom into a substrate and reducing the second into a water molecule. Two electrons are provided by NADPH via a two-protein mitochondrial transfer system comprising flavoprotein FDXR (adrenodoxin/ferredoxin reductase) and nonheme iron-sulfur protein FDX1 or FDX2 (adrenodoxin/ferredoxin). Could also be involved in the androgen metabolic pathway. The chain is Cytochrome P450 11B2, mitochondrial (CYP11B2) from Mesocricetus auratus (Golden hamster).